A 151-amino-acid chain; its full sequence is MNLWLLVCLVASLMGAWSTVHTQGVSEDCCLAYHHRARPRLLMRAQGYQRQEVSGSCNLPAVIFFFPKNKMLCVNPRVNWLPNVFKFLDNRNNTHSKQHLGSRRNLQDSHLGGQRSNTGMSRLAHSKSKSSRSTRSNKKKTSFLNMANPGP.

The signal sequence occupies residues 1–22 (MNLWLLVCLVASLMGAWSTVHT). 2 disulfide bridges follow: cysteine 29–cysteine 57 and cysteine 30–cysteine 73. The tract at residues 94–151 (THSKQHLGSRRNLQDSHLGGQRSNTGMSRLAHSKSKSSRSTRSNKKKTSFLNMANPGP) is disordered. Positions 124–141 (AHSKSKSSRSTRSNKKKT) are enriched in basic residues.

It belongs to the intercrine beta (chemokine CC) family.

The protein localises to the secreted. In terms of biological role, potentially involved in T-cell development. Recombinant protein shows chemotactic activity on thymocytes, macrophages, THP-1 cells, and dendritics cells but is inactive on peripheral blood lymphocytes and neutrophils. Binds to CCR9. Binds to atypical chemokine receptor ACKR4 and mediates the recruitment of beta-arrestin (ARRB1/2) to ACKR4. This Canis lupus familiaris (Dog) protein is C-C motif chemokine 25 (CCL25).